Here is a 322-residue protein sequence, read N- to C-terminus: Acetylglutamate kinase (322 aa).

Residues 85–86, Arg107, and Asn211 contribute to the substrate site; that span reads GG.

Belongs to the acetylglutamate kinase family. ArgB subfamily.

The protein resides in the cytoplasm. The enzyme catalyses N-acetyl-L-glutamate + ATP = N-acetyl-L-glutamyl 5-phosphate + ADP. It functions in the pathway amino-acid biosynthesis; L-arginine biosynthesis; N(2)-acetyl-L-ornithine from L-glutamate: step 2/4. Its function is as follows. Catalyzes the ATP-dependent phosphorylation of N-acetyl-L-glutamate. This is Acetylglutamate kinase from Methanosarcina barkeri (strain Fusaro / DSM 804).